We begin with the raw amino-acid sequence, 418 residues long: Glutamyl-tRNA reductase (418 aa).

Substrate-binding positions include 49 to 52 (TCNR), S105, 110 to 112 (EPQ), and Q116. Catalysis depends on C50, which acts as the Nucleophile. Position 185 to 190 (185 to 190 (GAGEMI)) interacts with NADP(+).

Belongs to the glutamyl-tRNA reductase family. Homodimer.

The enzyme catalyses (S)-4-amino-5-oxopentanoate + tRNA(Glu) + NADP(+) = L-glutamyl-tRNA(Glu) + NADPH + H(+). It functions in the pathway porphyrin-containing compound metabolism; protoporphyrin-IX biosynthesis; 5-aminolevulinate from L-glutamyl-tRNA(Glu): step 1/2. Its function is as follows. Catalyzes the NADPH-dependent reduction of glutamyl-tRNA(Glu) to glutamate 1-semialdehyde (GSA). The protein is Glutamyl-tRNA reductase of Aromatoleum aromaticum (strain DSM 19018 / LMG 30748 / EbN1) (Azoarcus sp. (strain EbN1)).